We begin with the raw amino-acid sequence, 824 residues long: Translation initiation factor IF-2 (824 aa).

The tract at residues 1–234 is disordered; it reads MSDQDGKKPL…RQKAMGGSVD (234 aa). Composition is skewed to basic and acidic residues over residues 59–75 and 82–144; these read GGKR…DRRL and KARE…RRNA. Low complexity predominate over residues 145-159; that stretch reads PPEAAAPAVDPAAAA. A compositionally biased stretch (basic and acidic residues) spans 170–186; it reads ARREPERDNKRENRSRG. The 171-residue stretch at 321–491 folds into the tr-type G domain; the sequence is PRPPVITIMG…ALQAELLELK (171 aa). A G1 region spans residues 330–337; sequence GHVDHGKT. Residue 330 to 337 participates in GTP binding; sequence GHVDHGKT. Residues 355–359 form a G2 region; sequence GITQH. Residues 377 to 380 are G3; the sequence is DTPG. Residues 377 to 381 and 431 to 434 contribute to the GTP site; these read DTPGH and NKID. The G4 stretch occupies residues 431–434; it reads NKID. The interval 467–469 is G5; sequence SAM.

It belongs to the TRAFAC class translation factor GTPase superfamily. Classic translation factor GTPase family. IF-2 subfamily.

It localises to the cytoplasm. Functionally, one of the essential components for the initiation of protein synthesis. Protects formylmethionyl-tRNA from spontaneous hydrolysis and promotes its binding to the 30S ribosomal subunits. Also involved in the hydrolysis of GTP during the formation of the 70S ribosomal complex. The protein is Translation initiation factor IF-2 of Jannaschia sp. (strain CCS1).